Here is an 894-residue protein sequence, read N- to C-terminus: Glutamate receptor 3 (894 aa).

A signal peptide spans 1–28; sequence MARQKKMGQNVLRAVFFLVLGLLGHSHG. The Extracellular segment spans residues 29–552; the sequence is GFPNTISIGG…GVFSFLDPLA (524 aa). N-linked (GlcNAc...) asparagine glycans are attached at residues asparagine 63, asparagine 266, asparagine 380, asparagine 415, and asparagine 422. The cysteines at positions 91 and 340 are disulfide-linked. L-glutamate contacts are provided by proline 508, threonine 510, and arginine 515. Residues 553–573 form a helical membrane-spanning segment; it reads YEIWMCIVFASIGVSVVLFLV. Over 574–602 the chain is Cytoplasmic; that stretch reads SRFSPYEWHLEDNNEEPRDPQSPPDPPNE. The helical; Pore-forming intramembrane region spans 603–618; it reads FGIFNSLWFSLGAFMQ. An intramembrane segment occupies 619–621; it reads QGC. Cysteine 621 carries S-palmitoyl cysteine lipidation. The Cytoplasmic segment spans residues 622–627; it reads DISPRS. The chain crosses the membrane as a helical span at residues 628 to 648; sequence LSGRIVGGVWWFFTLIIISSY. The Extracellular portion of the chain corresponds to 649–823; sequence TANLAAFLTV…DKTSALSLSN (175 aa). Positions 686, 687, and 737 each coordinate L-glutamate. A disulfide bond links cysteine 750 and cysteine 805. A helical membrane pass occupies residues 824–844; the sequence is VAGVFYILVGGLGLAMMVALI. At 845 to 894 the chain is on the cytoplasmic side; sequence EFCYKSRAESKRMKLTKNTQNFKPAPATNTQNYATYREGYNVYGTESVKI. Residue cysteine 847 is the site of S-palmitoyl cysteine attachment. 2 positions are modified to phosphotyrosine: tyrosine 877 and tyrosine 887.

The protein belongs to the glutamate-gated ion channel (TC 1.A.10.1) family. GRIA3 subfamily. In terms of assembly, homotetramer or heterotetramer of pore-forming glutamate receptor subunits. Tetramers may be formed by the dimerization of dimers. Interacts with PICK1, GRIP1 and GRIP2. Found in a complex with GRIA1, GRIA2, GRIA4, CNIH2, CNIH3, CACNG2, CACNG3, CACNG4, CACNG5, CACNG7 and CACNG8. Interacts with CACNG5. Found in a complex with GRIA1, GRIA2, GRIA4, DLG4, CACNG8 and CNIH2.

The protein localises to the cell membrane. The protein resides in the postsynaptic cell membrane. It is found in the postsynaptic density membrane. The enzyme catalyses Ca(2+)(in) = Ca(2+)(out). Its function is as follows. Ionotropic glutamate receptor that functions as a ligand-gated cation channel, gated by L-glutamate and glutamatergic agonists such as alpha-amino-3-hydroxy-5-methyl-4-isoxazolepropionic acid (AMPA), quisqualic acid, and kainic acid. L-glutamate acts as an excitatory neurotransmitter at many synapses in the central nervous system and plays an important role in fast excitatory synaptic transmission by inducing long-term potentiation. Binding of the excitatory neurotransmitter L-glutamate induces a conformation change, leading to the opening of the cation channel, and thereby converts the chemical signal to an electrical impulse upon entry of calcium. The receptor then desensitizes rapidly and enters a transient inactive state, characterized by the presence of bound agonist. In the presence of CACNG8, shows resensitization which is characterized by a delayed accumulation of current flux upon continued application of glutamate. This Macaca fascicularis (Crab-eating macaque) protein is Glutamate receptor 3.